A 589-amino-acid polypeptide reads, in one-letter code: 2-succinyl-5-enolpyruvyl-6-hydroxy-3-cyclohexene-1-carboxylate synthase (589 aa).

Belongs to the TPP enzyme family. MenD subfamily. As to quaternary structure, homodimer. Requires Mg(2+) as cofactor. Mn(2+) is required as a cofactor. The cofactor is thiamine diphosphate.

It carries out the reaction isochorismate + 2-oxoglutarate + H(+) = 5-enolpyruvoyl-6-hydroxy-2-succinyl-cyclohex-3-ene-1-carboxylate + CO2. It functions in the pathway quinol/quinone metabolism; 1,4-dihydroxy-2-naphthoate biosynthesis; 1,4-dihydroxy-2-naphthoate from chorismate: step 2/7. The protein operates within quinol/quinone metabolism; menaquinone biosynthesis. Functionally, catalyzes the thiamine diphosphate-dependent decarboxylation of 2-oxoglutarate and the subsequent addition of the resulting succinic semialdehyde-thiamine pyrophosphate anion to isochorismate to yield 2-succinyl-5-enolpyruvyl-6-hydroxy-3-cyclohexene-1-carboxylate (SEPHCHC). In Myxococcus xanthus (strain DK1622), this protein is 2-succinyl-5-enolpyruvyl-6-hydroxy-3-cyclohexene-1-carboxylate synthase.